The primary structure comprises 176 residues: Peptide deformylase (176 aa).

Fe cation-binding residues include cysteine 94 and histidine 136. The active site involves glutamate 137. Histidine 140 contributes to the Fe cation binding site.

It belongs to the polypeptide deformylase family. Fe(2+) is required as a cofactor.

It carries out the reaction N-terminal N-formyl-L-methionyl-[peptide] + H2O = N-terminal L-methionyl-[peptide] + formate. In terms of biological role, removes the formyl group from the N-terminal Met of newly synthesized proteins. Requires at least a dipeptide for an efficient rate of reaction. N-terminal L-methionine is a prerequisite for activity but the enzyme has broad specificity at other positions. In Bartonella quintana (strain Toulouse) (Rochalimaea quintana), this protein is Peptide deformylase.